A 111-amino-acid polypeptide reads, in one-letter code: Large ribosomal subunit protein uL22 (111 aa).

The protein belongs to the universal ribosomal protein uL22 family. As to quaternary structure, part of the 50S ribosomal subunit.

This protein binds specifically to 23S rRNA; its binding is stimulated by other ribosomal proteins, e.g. L4, L17, and L20. It is important during the early stages of 50S assembly. It makes multiple contacts with different domains of the 23S rRNA in the assembled 50S subunit and ribosome. Its function is as follows. The globular domain of the protein is located near the polypeptide exit tunnel on the outside of the subunit, while an extended beta-hairpin is found that lines the wall of the exit tunnel in the center of the 70S ribosome. This Polynucleobacter necessarius subsp. necessarius (strain STIR1) protein is Large ribosomal subunit protein uL22.